The primary structure comprises 338 residues: Alanine racemase (338 aa).

The Proton acceptor; specific for D-alanine role is filled by Lys-33. Position 33 is an N6-(pyridoxal phosphate)lysine (Lys-33). Residue Arg-126 coordinates substrate. Tyr-236 acts as the Proton acceptor; specific for L-alanine in catalysis. Position 284 (Met-284) interacts with substrate.

This sequence belongs to the alanine racemase family. It depends on pyridoxal 5'-phosphate as a cofactor.

It carries out the reaction L-alanine = D-alanine. It participates in amino-acid biosynthesis; D-alanine biosynthesis; D-alanine from L-alanine: step 1/1. Its function is as follows. Catalyzes the interconversion of L-alanine and D-alanine. May also act on other amino acids. The polypeptide is Alanine racemase (alr) (Aquifex aeolicus (strain VF5)).